A 564-amino-acid chain; its full sequence is Threonine--tRNA ligase (564 aa).

A catalytic region spans residues 167 to 464; it reads DHRAIGKRLE…LLEKTHGNLP (298 aa). Cys-260, His-311, and His-441 together coordinate Zn(2+).

This sequence belongs to the class-II aminoacyl-tRNA synthetase family. Homodimer. Zn(2+) serves as cofactor.

The protein resides in the cytoplasm. It carries out the reaction tRNA(Thr) + L-threonine + ATP = L-threonyl-tRNA(Thr) + AMP + diphosphate + H(+). Its function is as follows. Catalyzes the attachment of threonine to tRNA(Thr) in a two-step reaction: L-threonine is first activated by ATP to form Thr-AMP and then transferred to the acceptor end of tRNA(Thr). Also edits incorrectly charged L-seryl-tRNA(Thr). The polypeptide is Threonine--tRNA ligase (Mycoplasma pneumoniae (strain ATCC 29342 / M129 / Subtype 1) (Mycoplasmoides pneumoniae)).